Reading from the N-terminus, the 309-residue chain is Tagatose-6-phosphate kinase (309 aa).

It belongs to the carbohydrate kinase PfkB family. LacC subfamily.

It catalyses the reaction D-tagatofuranose 6-phosphate + ATP = D-tagatofuranose 1,6-bisphosphate + ADP + H(+). The protein operates within carbohydrate metabolism; D-tagatose 6-phosphate degradation; D-glyceraldehyde 3-phosphate and glycerone phosphate from D-tagatose 6-phosphate: step 1/2. In Streptococcus pyogenes serotype M12 (strain MGAS2096), this protein is Tagatose-6-phosphate kinase.